Reading from the N-terminus, the 311-residue chain is Aspartate carbamoyltransferase catalytic subunit (311 aa).

Carbamoyl phosphate-binding residues include Arg-58 and Thr-59. Lys-86 is an L-aspartate binding site. Arg-108, His-136, and Gln-139 together coordinate carbamoyl phosphate. Arg-169 and Arg-223 together coordinate L-aspartate. Carbamoyl phosphate is bound by residues Gly-264 and Pro-265.

It belongs to the aspartate/ornithine carbamoyltransferase superfamily. ATCase family. As to quaternary structure, heterododecamer (2C3:3R2) of six catalytic PyrB chains organized as two trimers (C3), and six regulatory PyrI chains organized as three dimers (R2).

It carries out the reaction carbamoyl phosphate + L-aspartate = N-carbamoyl-L-aspartate + phosphate + H(+). It participates in pyrimidine metabolism; UMP biosynthesis via de novo pathway; (S)-dihydroorotate from bicarbonate: step 2/3. Catalyzes the condensation of carbamoyl phosphate and aspartate to form carbamoyl aspartate and inorganic phosphate, the committed step in the de novo pyrimidine nucleotide biosynthesis pathway. The sequence is that of Aspartate carbamoyltransferase catalytic subunit from Desulfosudis oleivorans (strain DSM 6200 / JCM 39069 / Hxd3) (Desulfococcus oleovorans).